We begin with the raw amino-acid sequence, 428 residues long: Light-independent protochlorophyllide reductase subunit N (428 aa).

3 residues coordinate [4Fe-4S] cluster: Cys29, Cys54, and Cys115.

Belongs to the BchN/ChlN family. Protochlorophyllide reductase is composed of three subunits; BchL, BchN and BchB. Forms a heterotetramer of two BchB and two BchN subunits. Requires [4Fe-4S] cluster as cofactor.

The enzyme catalyses chlorophyllide a + oxidized 2[4Fe-4S]-[ferredoxin] + 2 ADP + 2 phosphate = protochlorophyllide a + reduced 2[4Fe-4S]-[ferredoxin] + 2 ATP + 2 H2O. It functions in the pathway porphyrin-containing compound metabolism; bacteriochlorophyll biosynthesis (light-independent). Component of the dark-operative protochlorophyllide reductase (DPOR) that uses Mg-ATP and reduced ferredoxin to reduce ring D of protochlorophyllide (Pchlide) to form chlorophyllide a (Chlide). This reaction is light-independent. The NB-protein (BchN-BchB) is the catalytic component of the complex. This chain is Light-independent protochlorophyllide reductase subunit N, found in Cereibacter sphaeroides (strain ATCC 17025 / ATH 2.4.3) (Rhodobacter sphaeroides).